The chain runs to 404 residues: Glycerol-1-phosphate dehydrogenase [NAD(P)+] (404 aa).

Residues Asp-55, 117–121 (GTVHD), and 139–142 (TAPS) contribute to the NAD(+) site. Asp-144 is a binding site for substrate. Residue Ser-148 participates in NAD(+) binding. Position 191 (Asp-191) interacts with substrate. Positions 191 and 271 each coordinate Ni(2+). His-275 is a substrate binding site. His-291 provides a ligand contact to Ni(2+).

This sequence belongs to the glycerol-1-phosphate dehydrogenase family. As to quaternary structure, homodimer. Ni(2+) is required as a cofactor.

It localises to the cytoplasm. The catalysed reaction is sn-glycerol 1-phosphate + NAD(+) = dihydroxyacetone phosphate + NADH + H(+). It catalyses the reaction sn-glycerol 1-phosphate + NADP(+) = dihydroxyacetone phosphate + NADPH + H(+). In terms of biological role, catalyzes the NAD(P)H-dependent reduction of dihydroxyacetonephosphate (DHAP or glycerone phosphate) to glycerol 1-phosphate (G1P). The G1P thus generated is probably used for the synthesis of phosphoglycerolipids in Gram-positive bacterial species. This is Glycerol-1-phosphate dehydrogenase [NAD(P)+] from Geobacillus thermodenitrificans (strain NG80-2).